The following is a 206-amino-acid chain: Proteasome subunit beta type-2 (206 aa).

The protein belongs to the peptidase T1B family. In terms of assembly, the 26S proteasome consists of a 20S proteasome core and two 19S regulatory subunits. The 20S proteasome core is composed of 28 subunits that are arranged in four stacked rings, resulting in a barrel-shaped structure. The two end rings are each formed by seven alpha subunits, and the two central rings are each formed by seven beta subunits. The catalytic chamber with the active sites is on the inside of the barrel.

Its subcellular location is the cytoplasm. The protein resides in the nucleus. Non-catalytic component of the proteasome, a multicatalytic proteinase complex which is characterized by its ability to cleave peptides with Arg, Phe, Tyr, Leu, and Glu adjacent to the leaving group at neutral or slightly basic pH. The proteasome has an ATP-dependent proteolytic activity. This Trypanosoma brucei brucei protein is Proteasome subunit beta type-2 (PSB4).